The primary structure comprises 45 residues: uncharacterized protein (45 aa).

This is an uncharacterized protein from Archaeoglobus fulgidus (strain ATCC 49558 / DSM 4304 / JCM 9628 / NBRC 100126 / VC-16).